We begin with the raw amino-acid sequence, 726 residues long: Phenylalanine--tRNA ligase beta subunit (726 aa).

The 113-residue stretch at 38-150 (FSSSKGLLFA…NFASLNDDAS (113 aa)) folds into the tRNA-binding domain. The B5 domain maps to 394–467 (DKKVEINFDE…RFYNYDNFKE (74 aa)). Mg(2+) contacts are provided by D445, D451, E454, and E455.

Belongs to the phenylalanyl-tRNA synthetase beta subunit family. Type 1 subfamily. As to quaternary structure, tetramer of two alpha and two beta subunits. Requires Mg(2+) as cofactor.

The protein localises to the cytoplasm. It carries out the reaction tRNA(Phe) + L-phenylalanine + ATP = L-phenylalanyl-tRNA(Phe) + AMP + diphosphate + H(+). This is Phenylalanine--tRNA ligase beta subunit from Mycoplasmopsis synoviae (strain 53) (Mycoplasma synoviae).